The primary structure comprises 214 residues: Probable chemoreceptor glutamine deamidase CheD (214 aa).

Belongs to the CheD family.

The enzyme catalyses L-glutaminyl-[protein] + H2O = L-glutamyl-[protein] + NH4(+). Its function is as follows. Probably deamidates glutamine residues to glutamate on methyl-accepting chemotaxis receptors (MCPs), playing an important role in chemotaxis. The sequence is that of Probable chemoreceptor glutamine deamidase CheD from Vibrio vulnificus (strain CMCP6).